A 1068-amino-acid chain; its full sequence is Focal adhesion kinase 1 (1068 aa).

The tract at residues 1–26 is disordered; it reads MAAAYLDPNLNHNPSTNAKSRLSTGM. Residues 10-23 show a composition bias toward polar residues; the sequence is LNHNPSTNAKSRLS. In terms of domain architecture, FERM spans 35 to 355; the sequence is RVLRVFHYFE…GYCRLVSGAS (321 aa). 2 positions are modified to phosphotyrosine: Y403 and Y413. In terms of domain architecture, Protein kinase spans 435 to 693; the sequence is IELGRCIGEG…ELKAQLSTIL (259 aa). Residues 441-447, K467, and 513-515 contribute to the ATP site; these read IGEGQFG and ELC. D559 (proton acceptor) is an active-site residue. A phosphotyrosine; by autocatalysis mark is found at Y589 and Y590. The segment covering 699–710 has biased composition (basic and acidic residues); it reads QQEERMRMESRR. Disordered stretches follow at residues 699–750 and 869–912; these read QQEE…QHMM and GNQH…DGYN. Y874 and Y941 each carry phosphotyrosine.

The protein belongs to the protein kinase superfamily. Tyr protein kinase family. FAK subfamily. Post-translationally, phosphorylated on tyrosine residues; phosphorylated kinase is first detected during gastrulation, suggesting that tyrosine phosphorylation is developmentally regulated.

It is found in the cell junction. The protein resides in the focal adhesion. It localises to the cell membrane. The protein localises to the cytoplasm. Its subcellular location is the cytoskeleton. It is found in the cilium basal body. The catalysed reaction is L-tyrosyl-[protein] + ATP = O-phospho-L-tyrosyl-[protein] + ADP + H(+). Non-receptor protein-tyrosine kinase implicated in signaling pathways involved in cell motility, proliferation and apoptosis. Activated by tyrosine-phosphorylation in response to either integrin clustering induced by cell adhesion or antibody cross-linking, or via G-protein coupled receptor (GPCR) occupancy by ligands such as bombesin or lysophosphatidic acid, or via LDL receptor occupancy. Microtubule-induced dephosphorylation at Tyr-397 is crucial for the induction of focal adhesion disassembly. The sequence is that of Focal adhesion kinase 1 (ptk2) from Xenopus laevis (African clawed frog).